The primary structure comprises 386 residues: Lycopene beta-cyclase (386 aa).

Residue 3-33 (DLILVGGGLANGLIAWRLRQRYPQLNLLLIE) participates in NAD(+) binding.

It belongs to the lycopene cyclase family. FAD serves as cofactor.

The enzyme catalyses a carotenoid psi-end group = a carotenoid beta-end derivative. It catalyses the reaction all-trans-lycopene = gamma-carotene. The catalysed reaction is gamma-carotene = all-trans-beta-carotene. The protein operates within carotenoid biosynthesis; beta-carotene biosynthesis. Its function is as follows. Catalyzes the double cyclization reaction which converts lycopene to beta-carotene. The chain is Lycopene beta-cyclase from Pseudescherichia vulneris (Escherichia vulneris).